The sequence spans 500 residues: L-arabinose isomerase (500 aa).

The Mn(2+) site is built by E306, E333, H350, and H450.

The protein belongs to the arabinose isomerase family. As to quaternary structure, homohexamer. It depends on Mn(2+) as a cofactor.

It carries out the reaction beta-L-arabinopyranose = L-ribulose. It functions in the pathway carbohydrate degradation; L-arabinose degradation via L-ribulose; D-xylulose 5-phosphate from L-arabinose (bacterial route): step 1/3. Functionally, catalyzes the conversion of L-arabinose to L-ribulose. The protein is L-arabinose isomerase of Escherichia coli O17:K52:H18 (strain UMN026 / ExPEC).